The chain runs to 79 residues: Conotoxin Vi6.9 (79 aa).

The signal sequence occupies residues 1–22; sequence MKLTCMVIITVLFLTASQLITA. Positions 23-47 are excised as a propeptide; the sequence is DYSRDQRQYRAVRLGDEMRNFKGAR. Cystine bridges form between Cys49/Cys62, Cys56/Cys67, and Cys61/Cys77. 4-hydroxyproline occurs at positions 60 and 63.

Belongs to the conotoxin O1 superfamily. As to expression, expressed by the venom duct.

It localises to the secreted. Its function is as follows. Ion channel inhibitor that inhibits the increase in intracellular calcium upon depolarization in DRG neurons. In vivo, both intraperitoneal and intracranial injections into mice induce hyperactivity. The polypeptide is Conotoxin Vi6.9 (Conus virgo (Virgin cone)).